Here is a 404-residue protein sequence, read N- to C-terminus: Subtilisin-like proteinase Mp1 (404 aa).

Residues 1–19 (MVGFKTLALHLAAVLPALA) form the signal peptide. The propeptide occupies 20 to 112 (APVDKQATQV…VEPDQVWDLY (93 aa)). An Inhibitor I9 domain is found at 33–111 (SYIITLKQGA…FVEPDQVWDL (79 aa)). One can recognise a Peptidase S8 domain in the interval 121-404 (PWGLGSISHR…NLIAFNGVTA (284 aa)). A glycan (N-linked (GlcNAc...) asparagine) is linked at N133. Active-site charge relay system residues include D154, H186, and S347.

This sequence belongs to the peptidase S8 family.

The protein localises to the secreted. This is Subtilisin-like proteinase Mp1 from Magnaporthiopsis poae (Kentucky bluegrass fungus).